Consider the following 214-residue polypeptide: Large ribosomal subunit protein uL3 (214 aa).

The residue at position 153 (Gln153) is an N5-methylglutamine.

This sequence belongs to the universal ribosomal protein uL3 family. As to quaternary structure, part of the 50S ribosomal subunit. Forms a cluster with proteins L14 and L19. Methylated by PrmB.

In terms of biological role, one of the primary rRNA binding proteins, it binds directly near the 3'-end of the 23S rRNA, where it nucleates assembly of the 50S subunit. The polypeptide is Large ribosomal subunit protein uL3 (Aromatoleum aromaticum (strain DSM 19018 / LMG 30748 / EbN1) (Azoarcus sp. (strain EbN1))).